Reading from the N-terminus, the 345-residue chain is Phosphoribosylformylglycinamidine cyclo-ligase (345 aa).

Belongs to the AIR synthase family.

It is found in the cytoplasm. The enzyme catalyses 2-formamido-N(1)-(5-O-phospho-beta-D-ribosyl)acetamidine + ATP = 5-amino-1-(5-phospho-beta-D-ribosyl)imidazole + ADP + phosphate + H(+). It functions in the pathway purine metabolism; IMP biosynthesis via de novo pathway; 5-amino-1-(5-phospho-D-ribosyl)imidazole from N(2)-formyl-N(1)-(5-phospho-D-ribosyl)glycinamide: step 2/2. This chain is Phosphoribosylformylglycinamidine cyclo-ligase, found in Methylococcus capsulatus (strain ATCC 33009 / NCIMB 11132 / Bath).